The following is a 217-amino-acid chain: Small ribosomal subunit protein uS3 (217 aa).

In terms of domain architecture, KH type-2 spans 38 to 106 (IRKFIDNELK…KVHINVIEIK (69 aa)).

The protein belongs to the universal ribosomal protein uS3 family. Part of the 30S ribosomal subunit. Forms a tight complex with proteins S10 and S14.

Its function is as follows. Binds the lower part of the 30S subunit head. Binds mRNA in the 70S ribosome, positioning it for translation. The chain is Small ribosomal subunit protein uS3 from Staphylococcus haemolyticus (strain JCSC1435).